A 349-amino-acid chain; its full sequence is Acyl-CoA:acyl-CoA alkyltransferase (349 aa).

The active-site Proton acceptor is E97. C123 acts as the Acyl-thioester intermediate in catalysis.

It belongs to the thiolase-like superfamily. OleA family.

It catalyses the reaction a 1,2-saturated acyl-CoA + an acyl-CoA + H2O = an (R)-2-alkyl-3-oxoalkanoate + 2 CoA + H(+). In terms of biological role, involved in olefin biosynthesis. Catalyzes a non-decarboxylative head-to-head Claisen condensation of two acyl-CoA molecules, generating an (R)-2-alkyl-3-oxoalkanoate. The S.oneidensis oleABCD genes produce 3,6,9,12,15,19,22,25,28-hentriacontanonaene, which may aid the cells in adapting to a sudden drop in temperature. In Shewanella oneidensis (strain ATCC 700550 / JCM 31522 / CIP 106686 / LMG 19005 / NCIMB 14063 / MR-1), this protein is Acyl-CoA:acyl-CoA alkyltransferase.